Here is a 113-residue protein sequence, read N- to C-terminus: UPF0212 protein MmarC6_1165 (113 aa).

Belongs to the UPF0212 family.

The polypeptide is UPF0212 protein MmarC6_1165 (Methanococcus maripaludis (strain C6 / ATCC BAA-1332)).